The sequence spans 355 residues: UDP-N-acetylglucosamine--N-acetylmuramyl-(pentapeptide) pyrophosphoryl-undecaprenol N-acetylglucosamine transferase (355 aa).

UDP-N-acetyl-alpha-D-glucosamine-binding positions include 11–13 (TGG), N120, R161, S188, and Q280.

Belongs to the glycosyltransferase 28 family. MurG subfamily.

Its subcellular location is the cell inner membrane. The catalysed reaction is di-trans,octa-cis-undecaprenyl diphospho-N-acetyl-alpha-D-muramoyl-L-alanyl-D-glutamyl-meso-2,6-diaminopimeloyl-D-alanyl-D-alanine + UDP-N-acetyl-alpha-D-glucosamine = di-trans,octa-cis-undecaprenyl diphospho-[N-acetyl-alpha-D-glucosaminyl-(1-&gt;4)]-N-acetyl-alpha-D-muramoyl-L-alanyl-D-glutamyl-meso-2,6-diaminopimeloyl-D-alanyl-D-alanine + UDP + H(+). It functions in the pathway cell wall biogenesis; peptidoglycan biosynthesis. Cell wall formation. Catalyzes the transfer of a GlcNAc subunit on undecaprenyl-pyrophosphoryl-MurNAc-pentapeptide (lipid intermediate I) to form undecaprenyl-pyrophosphoryl-MurNAc-(pentapeptide)GlcNAc (lipid intermediate II). The sequence is that of UDP-N-acetylglucosamine--N-acetylmuramyl-(pentapeptide) pyrophosphoryl-undecaprenol N-acetylglucosamine transferase from Prochlorococcus marinus (strain MIT 9211).